The following is a 121-amino-acid chain: Large ribosomal subunit protein uL14c (121 aa).

As to quaternary structure, component of the chloroplast large ribosomal subunit (LSU). Mature 70S chloroplast ribosomes of higher plants consist of a small (30S) and a large (50S) subunit. The 30S small subunit contains 1 molecule of ribosomal RNA (16S rRNA) and 24 different proteins. The 50S large subunit contains 3 rRNA molecules (23S, 5S and 4.5S rRNA) and 33 different proteins.

It localises to the plastid. Its subcellular location is the chloroplast. Its function is as follows. Component of the chloroplast ribosome (chloro-ribosome), a dedicated translation machinery responsible for the synthesis of chloroplast genome-encoded proteins, including proteins of the transcription and translation machinery and components of the photosynthetic apparatus. In Spinacia oleracea (Spinach), this protein is Large ribosomal subunit protein uL14c.